The following is a 236-amino-acid chain: (5-formylfuran-3-yl)methyl phosphate synthase (236 aa).

Lys27 (schiff-base intermediate with substrate) is an active-site residue. Catalysis depends on Lys85, which acts as the Proton acceptor.

Belongs to the MfnB family.

It catalyses the reaction 2 D-glyceraldehyde 3-phosphate = 4-(hydroxymethyl)-2-furancarboxaldehyde phosphate + phosphate + 2 H2O. Its pathway is cofactor biosynthesis; methanofuran biosynthesis. Its function is as follows. Catalyzes the formation of 4-(hydroxymethyl)-2-furancarboxaldehyde phosphate (4-HFC-P) from two molecules of glyceraldehyde-3-P (GA-3-P). This Methanococcus maripaludis (strain C7 / ATCC BAA-1331) protein is (5-formylfuran-3-yl)methyl phosphate synthase.